Reading from the N-terminus, the 505-residue chain is Histidine ammonia-lyase (505 aa).

Residues 144–146 constitute a cross-link (5-imidazolinone (Ala-Gly)); it reads ASG. Position 145 is a 2,3-didehydroalanine (Ser) (serine 145).

Belongs to the PAL/histidase family. Contains an active site 4-methylidene-imidazol-5-one (MIO), which is formed autocatalytically by cyclization and dehydration of residues Ala-Ser-Gly.

The protein localises to the cytoplasm. The enzyme catalyses L-histidine = trans-urocanate + NH4(+). It participates in amino-acid degradation; L-histidine degradation into L-glutamate; N-formimidoyl-L-glutamate from L-histidine: step 1/3. This Legionella pneumophila (strain Corby) protein is Histidine ammonia-lyase.